A 270-amino-acid chain; its full sequence is Flagellar hook-basal body complex protein FlhO (270 aa).

Belongs to the flagella basal body rod proteins family.

In terms of biological role, not required for motility. The protein is Flagellar hook-basal body complex protein FlhO (flhO) of Bacillus subtilis (strain 168).